The chain runs to 327 residues: Putative HTH-type transcriptional regulatory protein Mbar_A2318 (327 aa).

The HTH cro/C1-type domain occupies 132–190 (LKKARMGQSMSLGTLASMVGVSRRTISKYEEEGMDASIDVVLQLEDIFGVELAKPINIL). The segment at residues 143–162 (LGTLASMVGVSRRTISKYEE) is a DNA-binding region (H-T-H motif).

The polypeptide is Putative HTH-type transcriptional regulatory protein Mbar_A2318 (Methanosarcina barkeri (strain Fusaro / DSM 804)).